The following is a 150-amino-acid chain: Large ribosomal subunit protein bL9 (150 aa).

Belongs to the bacterial ribosomal protein bL9 family.

Its function is as follows. Binds to the 23S rRNA. The chain is Large ribosomal subunit protein bL9 from Neisseria meningitidis serogroup B (strain ATCC BAA-335 / MC58).